The sequence spans 413 residues: Histidine--tRNA ligase (413 aa).

This sequence belongs to the class-II aminoacyl-tRNA synthetase family. In terms of assembly, homodimer.

It localises to the cytoplasm. It carries out the reaction tRNA(His) + L-histidine + ATP = L-histidyl-tRNA(His) + AMP + diphosphate + H(+). The protein is Histidine--tRNA ligase of Wolbachia sp. subsp. Brugia malayi (strain TRS).